The following is a 341-amino-acid chain: L-threonine 3-dehydrogenase (341 aa).

Cys-38 lines the Zn(2+) pocket. Catalysis depends on charge relay system residues Thr-40 and His-43. 6 residues coordinate Zn(2+): His-63, Glu-64, Cys-93, Cys-96, Cys-99, and Cys-107. NAD(+) contacts are provided by residues Ile-175, Asp-195, Arg-200, 262 to 264, and 286 to 287; these read LGI and IY.

It belongs to the zinc-containing alcohol dehydrogenase family. As to quaternary structure, homotetramer. Zn(2+) is required as a cofactor.

The protein resides in the cytoplasm. The catalysed reaction is L-threonine + NAD(+) = (2S)-2-amino-3-oxobutanoate + NADH + H(+). It functions in the pathway amino-acid degradation; L-threonine degradation via oxydo-reductase pathway; glycine from L-threonine: step 1/2. Functionally, catalyzes the NAD(+)-dependent oxidation of L-threonine to 2-amino-3-ketobutyrate. The chain is L-threonine 3-dehydrogenase from Shewanella oneidensis (strain ATCC 700550 / JCM 31522 / CIP 106686 / LMG 19005 / NCIMB 14063 / MR-1).